We begin with the raw amino-acid sequence, 177 residues long: Large ribosomal subunit protein eL20 (177 aa).

This sequence belongs to the eukaryotic ribosomal protein eL20 family.

The protein is Large ribosomal subunit protein eL20 (RpL18A) of Drosophila melanogaster (Fruit fly).